Reading from the N-terminus, the 263-residue chain is uncharacterized protein (263 aa).

ATP is bound at residue 16 to 23 (AKGGTGKT).

To M.jannaschii MJ0547 and MJ0169.

This is an uncharacterized protein from Methanocaldococcus jannaschii (strain ATCC 43067 / DSM 2661 / JAL-1 / JCM 10045 / NBRC 100440) (Methanococcus jannaschii).